Here is a 1423-residue protein sequence, read N- to C-terminus: Histone-lysine N-methyltransferase ATXR7 (1423 aa).

In terms of domain architecture, GYF spans 263-312 (HACWFLVDGEGRNHGPHSILELFSWQQHGYVSDAALIRDGENKLRPITLA). 3 disordered regions span residues 923–960 (CKDHEESLSNKPSQKVKKAHTSKLKRKNLSDARDEGTK), 1057–1097 (CSIS…SSTD), and 1115–1158 (LPCH…GRPK). The segment covering 936–949 (QKVKKAHTSKLKRK) has biased composition (basic residues). Over residues 950-959 (NLSDARDEGT) the composition is skewed to basic and acidic residues. Residues 1057 to 1071 (CSISQKGRKSSQSSI) show a composition bias toward polar residues. 2 stretches are compositionally biased toward basic and acidic residues: residues 1115–1124 (LPCHTSDKLQ) and 1140–1157 (HTTERSPIKDLSVDDGRP). The 118-residue stretch at 1266 to 1383 (KHLRFQQSKI…AGEEISYNYK (118 aa)) folds into the SET domain. An S-adenosyl-L-methionine-binding site is contributed by Tyr-1382.

This sequence belongs to the class V-like SAM-binding methyltransferase superfamily. Histone-lysine methyltransferase family. TRX/MLL subfamily. Expressed in the shoot and root apices, vascular tissues and mesophyll cells of rosette leaves.

The protein resides in the nucleus. It carries out the reaction L-lysyl(4)-[histone H3] + 3 S-adenosyl-L-methionine = N(6),N(6),N(6)-trimethyl-L-lysyl(4)-[histone H3] + 3 S-adenosyl-L-homocysteine + 3 H(+). It catalyses the reaction L-lysyl(36)-[histone H3] + 2 S-adenosyl-L-methionine = N(6),N(6)-dimethyl-L-lysyl(36)-[histone H3] + 2 S-adenosyl-L-homocysteine + 2 H(+). In terms of biological role, histone methyltransferase involved in regulation of flowering time. Required for the expression of the flowering repressors FLC and MADS-box genes of the MAF family. Required for histone H3 dimethylation on 'Lys-36' H3K36me2 at the FLC locus. Required for histone H3 trimethylation on 'Lys-4' (H3K4me3) at the FLC locus. Prevents trimethylation on 'Lys-27' (H3K27me3) at the same locus. Involved in the control of seed dormancy and germination. The polypeptide is Histone-lysine N-methyltransferase ATXR7 (Arabidopsis thaliana (Mouse-ear cress)).